Consider the following 249-residue polypeptide: MRILIANDDGVYAPGLAALYDALADYAECTVVAPIQDMSGASSALTLDRPLHPVSMPNGFIGLNGSPTDCVHLGLNGLLEHTPDMVVSGINLGANLGDDVLYSGTVAAAIEGRFTGRPAFAFSLLSRLPDNLSTAAYIARALVEKHDRLELPPRTVLSVNVPNLPLDHIRGIQLTRLGHRSRAKPPVKQANPRGKEGYWISVAGDVEDGGPGTDFHAVMQGYVSITPLQLDRTFREAFDGLESWLENVL.

Asp8, Asp9, Ser39, and Asn91 together coordinate a divalent metal cation.

It belongs to the SurE nucleotidase family. The cofactor is a divalent metal cation.

Its subcellular location is the cytoplasm. It carries out the reaction a ribonucleoside 5'-phosphate + H2O = a ribonucleoside + phosphate. Functionally, nucleotidase that shows phosphatase activity on nucleoside 5'-monophosphates. This Stutzerimonas stutzeri (strain A1501) (Pseudomonas stutzeri) protein is 5'-nucleotidase SurE.